The following is a 435-amino-acid chain: GTPase Der (435 aa).

2 EngA-type G domains span residues 4-167 (PTLA…PSED) and 175-350 (IKFS…ENQT). GTP-binding positions include 10 to 17 (GRPNVGKS), 57 to 61 (DTGGI), 119 to 122 (NKVD), 181 to 188 (GRPNVGKS), 228 to 232 (DTAGI), and 293 to 296 (NKWD). Residues 351–435 (RRIQSSVLND…PIHIIARKRK (85 aa)) form the KH-like domain.

This sequence belongs to the TRAFAC class TrmE-Era-EngA-EngB-Septin-like GTPase superfamily. EngA (Der) GTPase family. Associates with the 50S ribosomal subunit.

Functionally, GTPase that plays an essential role in the late steps of ribosome biogenesis. The sequence is that of GTPase Der from Lacticaseibacillus casei (strain BL23) (Lactobacillus casei).